A 1059-amino-acid chain; its full sequence is Carbamoyl phosphate synthase large chain (1059 aa).

A carboxyphosphate synthetic domain region spans residues 1–401 (MPKRTDIKKI…SLLKACRSLE (401 aa)). The ATP site is built by arginine 129, arginine 169, glycine 175, glycine 176, arginine 208, isoleucine 210, glutamate 215, glycine 241, isoleucine 242, histidine 243, glutamine 284, and glutamate 298. The ATP-grasp 1 domain occupies 133-327 (KQLMEDLEQP…IAKLAAKIAV (195 aa)). Glutamine 284, glutamate 298, and asparagine 300 together coordinate Mg(2+). Residues glutamine 284, glutamate 298, and asparagine 300 each coordinate Mn(2+). Residues 402 to 546 (IGVYHNEMPE…YSTYEWENES (145 aa)) form an oligomerization domain region. Residues 547–929 (IKSEKESVIV…ALYKAFEASY (383 aa)) form a carbamoyl phosphate synthetic domain region. The 191-residue stretch at 671–861 (EQALKDLNIP…MAQIATKLIL (191 aa)) folds into the ATP-grasp 2 domain. 10 residues coordinate ATP: arginine 707, serine 746, leucine 748, glutamate 752, glycine 777, valine 778, histidine 779, serine 780, glutamine 820, and glutamate 832. Glutamine 820, glutamate 832, and asparagine 834 together coordinate Mg(2+). The Mn(2+) site is built by glutamine 820, glutamate 832, and asparagine 834. Residues 930–1059 (FHLPAFGNVI…ESRGFITQAI (130 aa)) enclose the MGS-like domain. The interval 930–1059 (FHLPAFGNVI…ESRGFITQAI (130 aa)) is allosteric domain.

The protein belongs to the CarB family. In terms of assembly, composed of two chains; the small (or glutamine) chain promotes the hydrolysis of glutamine to ammonia, which is used by the large (or ammonia) chain to synthesize carbamoyl phosphate. Tetramer of heterodimers (alpha,beta)4. Mg(2+) serves as cofactor. The cofactor is Mn(2+).

The catalysed reaction is hydrogencarbonate + L-glutamine + 2 ATP + H2O = carbamoyl phosphate + L-glutamate + 2 ADP + phosphate + 2 H(+). It carries out the reaction hydrogencarbonate + NH4(+) + 2 ATP = carbamoyl phosphate + 2 ADP + phosphate + 2 H(+). It functions in the pathway amino-acid biosynthesis; L-arginine biosynthesis; carbamoyl phosphate from bicarbonate: step 1/1. The protein operates within pyrimidine metabolism; UMP biosynthesis via de novo pathway; (S)-dihydroorotate from bicarbonate: step 1/3. Large subunit of the glutamine-dependent carbamoyl phosphate synthetase (CPSase). CPSase catalyzes the formation of carbamoyl phosphate from the ammonia moiety of glutamine, carbonate, and phosphate donated by ATP, constituting the first step of 2 biosynthetic pathways, one leading to arginine and/or urea and the other to pyrimidine nucleotides. The large subunit (synthetase) binds the substrates ammonia (free or transferred from glutamine from the small subunit), hydrogencarbonate and ATP and carries out an ATP-coupled ligase reaction, activating hydrogencarbonate by forming carboxy phosphate which reacts with ammonia to form carbamoyl phosphate. This Streptococcus mutans serotype c (strain ATCC 700610 / UA159) protein is Carbamoyl phosphate synthase large chain.